The primary structure comprises 1209 residues: 3',5'-cyclic-AMP phosphodiesterase, isoform I (1209 aa).

7 disordered regions span residues 16–35, 59–82, 275–353, 372–403, 442–498, 626–655, and 754–792; these read NVAK…GSGT, GGGS…KRKS, LYSG…PLPP, SATS…SPRI, ETLA…MQAE, VPAS…LSQG, and SAGQ…RLPT. Composition is skewed to gly residues over residues 25 to 35 and 59 to 77; these read SSNGTGNGSGT and GGGS…GSGS. A compositionally biased stretch (polar residues) spans 275 to 290; that stretch reads LYSGSNPSTNPCQSAV. Over residues 291–314 the composition is skewed to low complexity; that stretch reads QNQGQNSNPNPNQNPNTNPNQNQQ. Residues 315–324 show a composition bias toward polar residues; it reads RCSCQPQTSP. Residues 372–383 show a composition bias toward low complexity; it reads SATSSSAGTVPP. Polar residues predominate over residues 385–400; that stretch reads GQQTQEYIAGTSSTPS. Low complexity-rich tracts occupy residues 445-462 and 472-483; these read ASSS…NSSS and TSSSASALATSH. Composition is skewed to polar residues over residues 484 to 498 and 627 to 645; these read PSNS…MQAE and PASN…SRSG. Residues 795–1124 form the PDEase domain; that stretch reads VETPRENELG…DYYQSMIPPS (330 aa). H871 acts as the Proton donor in catalysis. 871–875 is a binding site for 3',5'-cyclic AMP; the sequence is HNSLH. A divalent metal cation-binding residues include H875, H911, D912, and D1029. 3',5'-cyclic AMP is bound by residues D912, D1029, and Q1080. Residues 1146-1163 are compositionally biased toward acidic residues; sequence EESDQENLAELEEGDESG. The segment at 1146–1209 is disordered; the sequence is EESDQENLAE…CQNQPQHGGM (64 aa). Positions 1164–1181 are enriched in low complexity; sequence GESTTTGTTGTTAASALS. Residues 1182-1193 show a composition bias toward gly residues; that stretch reads GAGGGGGGGGGM. The span at 1199 to 1209 shows a compositional bias: polar residues; it reads GCQNQPQHGGM.

The protein belongs to the cyclic nucleotide phosphodiesterase family. PDE4 subfamily. As to quaternary structure, monomer. A divalent metal cation is required as a cofactor.

It carries out the reaction 3',5'-cyclic AMP + H2O = AMP + H(+). Its pathway is purine metabolism; 3',5'-cyclic AMP degradation; AMP from 3',5'-cyclic AMP: step 1/1. Hydrolyzes the second messenger cAMP, which is a key regulator of many important physiological processes. Vital for female fertility. Required for learning/memory. This is 3',5'-cyclic-AMP phosphodiesterase, isoform I from Drosophila melanogaster (Fruit fly).